A 156-amino-acid chain; its full sequence is Ribosome maturation factor RimP (156 aa).

Belongs to the RimP family.

Its subcellular location is the cytoplasm. Functionally, required for maturation of 30S ribosomal subunits. This is Ribosome maturation factor RimP from Bacillus cereus (strain G9842).